The sequence spans 237 residues: Peptidase E (237 aa).

Residues serine 122, aspartate 137, and histidine 159 each act as charge relay system in the active site.

This sequence belongs to the peptidase S51 family.

The protein localises to the cytoplasm. It catalyses the reaction Dipeptidase E catalyzes the hydrolysis of dipeptides Asp-|-Xaa. It does not act on peptides with N-terminal Glu, Asn or Gln, nor does it cleave isoaspartyl peptides.. Functionally, hydrolyzes dipeptides containing N-terminal aspartate residues. May play a role in allowing the cell to use peptide aspartate to spare carbon otherwise required for the synthesis of the aspartate family of amino acids. This Shewanella baltica (strain OS155 / ATCC BAA-1091) protein is Peptidase E.